The primary structure comprises 248 residues: Myelin protein P0 (248 aa).

An N-terminal signal peptide occupies residues 1–29 (MAPGAPSSSPSPILAALLFSSLVLSPAQA). The region spanning 30 to 143 (IVVYTDKEVY…DIVGKTSQVT (114 aa)) is the Ig-like V-type domain. The Extracellular portion of the chain corresponds to 30–153 (IVVYTDKEVY…LYVFEKVPTR (124 aa)). Cys-50 and Cys-127 form a disulfide bridge. N-linked (GlcNAc...) (complex) asparagine glycosylation is present at Asn-122. Residues 154–179 (YGVVLGAVIGGVLGVVLLVLLLFYVV) traverse the membrane as a helical segment. Residues 180-248 (RYCWLRRQAA…GLGESRKDKK (69 aa)) lie on the Cytoplasmic side of the membrane. The residue at position 210 (Ser-210) is a Phosphoserine; by PKC. The segment at 222–248 (MLDHSRSTKAASEKKAKGLGESRKDKK) is disordered. Over residues 224–248 (DHSRSTKAASEKKAKGLGESRKDKK) the composition is skewed to basic and acidic residues. Ser-226 and Ser-228 each carry phosphoserine. Phosphoserine; by PKC occurs at positions 233 and 243.

The protein belongs to the myelin P0 protein family. As to quaternary structure, homodimer and homotetramer. Post-translationally, N-glycosylated; contains sulfate-substituted glycan.

It is found in the cell membrane. Functionally, is an adhesion molecule necessary for normal myelination in the peripheral nervous system. It mediates adhesion between adjacent myelin wraps and ultimately drives myelin compaction. This chain is Myelin protein P0 (MPZ), found in Equus caballus (Horse).